The sequence spans 166 residues: Interferon gamma (166 aa).

The first 23 residues, 1 to 23, serve as a signal peptide directing secretion; it reads MKYTSYFLALLLCVLLGFSGSYG. Glutamine 24 is modified (pyrrolidone carboxylic acid). N-linked (GlcNAc...) asparagine glycosylation is found at asparagine 39 and asparagine 106.

This sequence belongs to the type II (or gamma) interferon family. As to quaternary structure, homodimer. Interacts with IFNGR1 (via extracellular domain); this interaction promotes IFNGR1 dimerization. Released primarily from activated T lymphocytes.

The protein resides in the secreted. Its function is as follows. Type II interferon produced by immune cells such as T-cells and NK cells that plays crucial roles in antimicrobial, antiviral, and antitumor responses by activating effector immune cells and enhancing antigen presentation. Primarily signals through the JAK-STAT pathway after interaction with its receptor IFNGR1 to affect gene regulation. Upon IFNG binding, IFNGR1 intracellular domain opens out to allow association of downstream signaling components JAK2, JAK1 and STAT1, leading to STAT1 activation, nuclear translocation and transcription of IFNG-regulated genes. Many of the induced genes are transcription factors such as IRF1 that are able to further drive regulation of a next wave of transcription. Plays a role in class I antigen presentation pathway by inducing a replacement of catalytic proteasome subunits with immunoproteasome subunits. In turn, increases the quantity, quality, and repertoire of peptides for class I MHC loading. Increases the efficiency of peptide generation also by inducing the expression of activator PA28 that associates with the proteasome and alters its proteolytic cleavage preference. Up-regulates as well MHC II complexes on the cell surface by promoting expression of several key molecules such as cathepsins B/CTSB, H/CTSH, and L/CTSL. Participates in the regulation of hematopoietic stem cells during development and under homeostatic conditions by affecting their development, quiescence, and differentiation. This Bos indicus (Zebu) protein is Interferon gamma (IFNG).